The sequence spans 289 residues: uncharacterized protein (289 aa).

The next 10 membrane-spanning stretches (helical) occupy residues 7–27 (LLLA…KIGL), 33–53 (FNLA…WVFW), 65–85 (WLHL…FQFL), 92–112 (ATNA…WGLV), 123–143 (GVFL…LEFF), 148–168 (IFGD…TVLG), 182–202 (AYAF…SGFA), 212–232 (VAAL…VWYY), 241–261 (SVAV…FYAL), and 265–285 (PDFF…LTTA). EamA domains follow at residues 14 to 136 (LIWA…LIVS) and 159 to 285 (FLWA…LTTA).

This sequence belongs to the EamA transporter family.

Its subcellular location is the cell membrane. This is an uncharacterized protein from Archaeoglobus fulgidus (strain ATCC 49558 / DSM 4304 / JCM 9628 / NBRC 100126 / VC-16).